The chain runs to 377 residues: N-acetylgalactosamine-6-phosphate deacetylase (377 aa).

Glu-125 lines the a divalent metal cation pocket. 136 to 137 is a substrate binding site; the sequence is AH. Positions 191 and 212 each coordinate a divalent metal cation. Substrate contacts are provided by residues 215–216, Arg-223, and 244–247; these read NG and DGHH. Catalysis depends on Asp-269, which acts as the Proton donor/acceptor. Residue 302–304 participates in substrate binding; sequence LAG.

The protein belongs to the metallo-dependent hydrolases superfamily. NagA family. It depends on a divalent metal cation as a cofactor.

It catalyses the reaction N-acetyl-D-galactosamine 6-phosphate + H2O = D-galactosamine 6-phosphate + acetate. Functionally, catalyzes the deacetylation of N-acetyl-D-galactosamine 6-phosphate to D-galactosamine 6-phosphate. Can probably also catalyze the deacetylation of N-acetyl-D-glucosamine 6-phosphate to D-glucosamine 6-phosphate. The chain is N-acetylgalactosamine-6-phosphate deacetylase (agaA) from Escherichia coli O157:H7.